The primary structure comprises 466 residues: Uridine kinase-like protein 3 (466 aa).

The uridine kinase stretch occupies residues 41-246 (HGQPFVIGVA…IVQHIHTKLG (206 aa)). The tract at residues 256-466 (NLYVIQSTFQ…GDRYFGTDDE (211 aa)) is uracil phosphoribosyltransferase. GTP is bound by residues K280, R289, and 323 to 326 (CKKL). R333 and R358 together coordinate 5-phospho-alpha-D-ribose 1-diphosphate. R378 contacts GTP. 5-phospho-alpha-D-ribose 1-diphosphate is bound by residues D384, 389–392 (TGNS), and E455. A uracil-binding site is contributed by 454–456 (GEF).

This sequence in the N-terminal section; belongs to the uridine kinase family. In the C-terminal section; belongs to the UPRTase family. The cofactor is Mg(2+).

It carries out the reaction UMP + diphosphate = 5-phospho-alpha-D-ribose 1-diphosphate + uracil. The catalysed reaction is cytidine + ATP = CMP + ADP + H(+). It catalyses the reaction uridine + ATP = UMP + ADP + H(+). It participates in pyrimidine metabolism; UMP biosynthesis via salvage pathway; UMP from uracil: step 1/1. It functions in the pathway pyrimidine metabolism; CTP biosynthesis via salvage pathway; CTP from cytidine: step 1/3. Its pathway is pyrimidine metabolism; UMP biosynthesis via salvage pathway; UMP from uridine: step 1/1. Its activity is regulated as follows. Allosterically activated by GTP. In terms of biological role, involved in the pyrimidine salvage pathway. The uracil phosphoribosyltransferase (UPRT) activity, that catalyzes the conversion of uracil and 5-phospho-alpha-D-ribose 1-diphosphate (PRPP) to UMP and diphosphate, is unsure. The protein is Uridine kinase-like protein 3 (UKL3) of Arabidopsis thaliana (Mouse-ear cress).